We begin with the raw amino-acid sequence, 417 residues long: Tryptophan synthase beta chain (417 aa).

Lysine 108 is modified (N6-(pyridoxal phosphate)lysine).

The protein belongs to the TrpB family. Tetramer of two alpha and two beta chains. It depends on pyridoxal 5'-phosphate as a cofactor.

The catalysed reaction is (1S,2R)-1-C-(indol-3-yl)glycerol 3-phosphate + L-serine = D-glyceraldehyde 3-phosphate + L-tryptophan + H2O. Its pathway is amino-acid biosynthesis; L-tryptophan biosynthesis; L-tryptophan from chorismate: step 5/5. The beta subunit is responsible for the synthesis of L-tryptophan from indole and L-serine. The chain is Tryptophan synthase beta chain (trpB) from Mycobacterium leprae (strain TN).